The primary structure comprises 426 residues: UDP-N-acetylglucosamine 1-carboxyvinyltransferase (426 aa).

Residue 22–23 (KN) participates in phosphoenolpyruvate binding. R94 contacts UDP-N-acetyl-alpha-D-glucosamine. C118 serves as the catalytic Proton donor. 2-(S-cysteinyl)pyruvic acid O-phosphothioketal is present on C118. UDP-N-acetyl-alpha-D-glucosamine is bound by residues 123 to 127 (RPVDL), D309, and I331.

This sequence belongs to the EPSP synthase family. MurA subfamily.

It is found in the cytoplasm. The catalysed reaction is phosphoenolpyruvate + UDP-N-acetyl-alpha-D-glucosamine = UDP-N-acetyl-3-O-(1-carboxyvinyl)-alpha-D-glucosamine + phosphate. It participates in cell wall biogenesis; peptidoglycan biosynthesis. Its function is as follows. Cell wall formation. Adds enolpyruvyl to UDP-N-acetylglucosamine. In Paracoccus denitrificans (strain Pd 1222), this protein is UDP-N-acetylglucosamine 1-carboxyvinyltransferase.